The chain runs to 490 residues: Subtilisin-like protease 8 (490 aa).

The first 26 residues, Met-1–Gln-26, serve as a signal peptide directing secretion. A propeptide spanning residues Asn-27–Thr-134 is cleaved from the precursor. Positions Ser-43–Thr-134 constitute an Inhibitor I9 domain. One can recognise a Peptidase S8 domain in the interval Pro-144–Ile-450. Catalysis depends on charge relay system residues Asp-180 and His-212. N-linked (GlcNAc...) asparagine glycosylation is present at Asn-282. The active-site Charge relay system is the Ser-378. Residue Asn-456 is glycosylated (N-linked (GlcNAc...) asparagine).

The protein belongs to the peptidase S8 family.

Its subcellular location is the secreted. Secreted subtilisin-like serine protease with keratinolytic activity that contributes to pathogenicity. This chain is Subtilisin-like protease 8 (SUB8), found in Arthroderma benhamiae (strain ATCC MYA-4681 / CBS 112371) (Trichophyton mentagrophytes).